The primary structure comprises 185 residues: Tetratricopeptide repeat protein 36 homolog (185 aa).

TPR repeat units lie at residues 53–86 (SREL…AQRA), 88–119 (VLNN…ASDQ), and 125–158 (CHAH…GSKF).

The protein belongs to the TTC36 family.

The chain is Tetratricopeptide repeat protein 36 homolog from Drosophila pseudoobscura pseudoobscura (Fruit fly).